We begin with the raw amino-acid sequence, 606 residues long: CDPK-related kinase 8 (606 aa).

Positions 1 to 14 (MGGCTSKPSTSSGR) are enriched in polar residues. Residues 1 to 132 (MGGCTSKPST…TEVPQREEEE (132 aa)) are disordered. Gly2 carries N-myristoyl glycine lipidation. The span at 98–110 (KHIRAALRRRKGK) shows a compositional bias: basic residues. A Protein kinase domain is found at 150–412 (VELGEEIGRG…ASQALMHPWI (263 aa)). ATP-binding positions include 156–164 (IGRGHFGYT) and Lys182. The active-site Proton acceptor is the Asp278. Ser318 carries the post-translational modification Phosphoserine. Residues 418 to 448 (DMNIPFDILIFRQMKAYLRSSSLRKAALRAL) are autoinhibitory domain. Positions 437–457 (SSSLRKAALRALSKTLIKDEI) are calmodulin binding (CaMBD). EF-hand domains are found at residues 455-491 (DEIL…ATEA), 492-527 (MKES…VHQH), 528-567 (ESLD…GPSI), and 570-599 (HSVL…VSVR). Ca(2+)-binding residues include Asn470, Asp472, Glu516, Asp545, Asn547, Asn549, Glu556, Asp581, and Lys583. Phosphoserine is present on Ser585.

It belongs to the protein kinase superfamily. Ser/Thr protein kinase family. CDPK subfamily. In terms of assembly, binds calmodulin (CaM) in a calcium-dependent manner. Post-translationally, autophosphorylated.

The protein localises to the membrane. It carries out the reaction L-seryl-[protein] + ATP = O-phospho-L-seryl-[protein] + ADP + H(+). It catalyses the reaction L-threonyl-[protein] + ATP = O-phospho-L-threonyl-[protein] + ADP + H(+). Its activity is regulated as follows. Activated by calcium and calmodulin. Autophosphorylation may play an important role in the regulation of the kinase activity. May play a role in signal transduction pathways that involve calcium as a second messenger. This is CDPK-related kinase 8 (CRK8) from Arabidopsis thaliana (Mouse-ear cress).